We begin with the raw amino-acid sequence, 124 residues long: Small ribosomal subunit protein uS12 (124 aa).

Residue Asp89 is modified to 3-methylthioaspartic acid.

The protein belongs to the universal ribosomal protein uS12 family. Part of the 30S ribosomal subunit. Contacts proteins S8 and S17. May interact with IF1 in the 30S initiation complex.

In terms of biological role, with S4 and S5 plays an important role in translational accuracy. Its function is as follows. Interacts with and stabilizes bases of the 16S rRNA that are involved in tRNA selection in the A site and with the mRNA backbone. Located at the interface of the 30S and 50S subunits, it traverses the body of the 30S subunit contacting proteins on the other side and probably holding the rRNA structure together. The combined cluster of proteins S8, S12 and S17 appears to hold together the shoulder and platform of the 30S subunit. In Shewanella sediminis (strain HAW-EB3), this protein is Small ribosomal subunit protein uS12.